We begin with the raw amino-acid sequence, 596 residues long: UvrABC system protein C (596 aa).

One can recognise a GIY-YIG domain in the interval 14–91 (QQPGCYLMKD…IKKYDPRYNV (78 aa)). The UVR domain maps to 196–231 (KDIRKNLAGEMQKASEALNFERAKEIRDTIQHIDAT).

The protein belongs to the UvrC family. As to quaternary structure, interacts with UvrB in an incision complex.

It is found in the cytoplasm. In terms of biological role, the UvrABC repair system catalyzes the recognition and processing of DNA lesions. UvrC both incises the 5' and 3' sides of the lesion. The N-terminal half is responsible for the 3' incision and the C-terminal half is responsible for the 5' incision. The polypeptide is UvrABC system protein C (Oceanobacillus iheyensis (strain DSM 14371 / CIP 107618 / JCM 11309 / KCTC 3954 / HTE831)).